The primary structure comprises 600 residues: Elongation factor 4 (600 aa).

Residues 4–187 (KYIRNFSIVA…AIIEQIPPPL (184 aa)) form the tr-type G domain. GTP-binding positions include 16-21 (DHGKST) and 134-137 (NKID).

It belongs to the TRAFAC class translation factor GTPase superfamily. Classic translation factor GTPase family. LepA subfamily.

The protein localises to the cell membrane. It carries out the reaction GTP + H2O = GDP + phosphate + H(+). Functionally, required for accurate and efficient protein synthesis under certain stress conditions. May act as a fidelity factor of the translation reaction, by catalyzing a one-codon backward translocation of tRNAs on improperly translocated ribosomes. Back-translocation proceeds from a post-translocation (POST) complex to a pre-translocation (PRE) complex, thus giving elongation factor G a second chance to translocate the tRNAs correctly. Binds to ribosomes in a GTP-dependent manner. In Malacoplasma penetrans (strain HF-2) (Mycoplasma penetrans), this protein is Elongation factor 4.